The chain runs to 357 residues: Chorismate synthase (357 aa).

An NADP(+)-binding site is contributed by R48. Residues 125–127, 238–239, G282, 297–301, and R323 contribute to the FMN site; these read RSS, NA, and KPTSS.

It belongs to the chorismate synthase family. As to quaternary structure, homotetramer. It depends on FMNH2 as a cofactor.

The catalysed reaction is 5-O-(1-carboxyvinyl)-3-phosphoshikimate = chorismate + phosphate. Its pathway is metabolic intermediate biosynthesis; chorismate biosynthesis; chorismate from D-erythrose 4-phosphate and phosphoenolpyruvate: step 7/7. In terms of biological role, catalyzes the anti-1,4-elimination of the C-3 phosphate and the C-6 proR hydrogen from 5-enolpyruvylshikimate-3-phosphate (EPSP) to yield chorismate, which is the branch point compound that serves as the starting substrate for the three terminal pathways of aromatic amino acid biosynthesis. This reaction introduces a second double bond into the aromatic ring system. The polypeptide is Chorismate synthase (Gluconacetobacter diazotrophicus (strain ATCC 49037 / DSM 5601 / CCUG 37298 / CIP 103539 / LMG 7603 / PAl5)).